The chain runs to 287 residues: Elongation factor Ts (287 aa).

An involved in Mg(2+) ion dislocation from EF-Tu region spans residues 80–83; the sequence is TDFL.

This sequence belongs to the EF-Ts family.

The protein localises to the cytoplasm. Functionally, associates with the EF-Tu.GDP complex and induces the exchange of GDP to GTP. It remains bound to the aminoacyl-tRNA.EF-Tu.GTP complex up to the GTP hydrolysis stage on the ribosome. The sequence is that of Elongation factor Ts from Pseudomonas putida (strain GB-1).